The primary structure comprises 1096 residues: Lysine-specific demethylase 4B (1096 aa).

One can recognise a JmjN domain in the interval 15 to 57 (IMTFRPTMEEFKDFNKYVAYIESQGAHRAGLAKIIPPKEWKPR). Tyrosine 133 serves as a coordination point for 2-oxoglutarate. The region spanning 146–309 (VAQWNIGSLR…YGKVATQCTC (164 aa)) is the JmjC domain. Histidine 189 and glutamate 191 together coordinate Fe cation. 2-oxoglutarate contacts are provided by asparagine 199 and lysine 207. Positions 235 and 241 each coordinate Zn(2+). 2-oxoglutarate is bound at residue lysine 242. Position 277 (histidine 277) interacts with Fe cation. Positions 307 and 309 each coordinate Zn(2+). The segment covering 369 to 382 (LLRRSHRKRSQPKK) has biased composition (basic residues). Disordered regions lie at residues 369-478 (LLRR…SEEA) and 557-649 (KGPT…VSDP). Over residues 391 to 406 (PGEGTAGAALLEEAGG) the composition is skewed to low complexity. Acidic residues predominate over residues 413–425 (GPEVDPEEEEEEP). Basic and acidic residues predominate over residues 430–443 (HGREAEGAEEDGRG). A compositionally biased stretch (basic residues) spans 444 to 458 (KLRPTKAKSERKKKS). Serine 566 bears the Phosphoserine mark. Lysine 602 bears the N6-acetyllysine mark. Positions 632-648 (SSDEEASPFSGEEDVSD) are enriched in acidic residues. A PHD-type 1 zinc finger spans residues 731-789 (MCFTSGGENTEPLPANSYIGDDGTSPLIACGKCCLQVHASCYGIRPELVNEGWTCSRCA). The C2HC pre-PHD-type zinc finger occupies 794–827 (TAECCLCNLRGGALQMTTDRRWIHVICAIAVPEA). The PHD-type 2 zinc-finger motif lies at 850–907 (LKCVYCRKRMKKVSGACIQCSYEHCSTSFHVTCAHAAGVLMEPDDWPYVVSITCLKHK). 2 consecutive Tudor domains span residues 917-974 (RAVS…CVQL) and 975-1031 (GPPS…EELP). The tract at residues 1037-1073 (RLSLSTGAPQEPAFSGEEAKAAKRPRVGTPLATEDSG) is disordered. Threonine 1065 is modified (phosphothreonine).

It belongs to the JHDM3 histone demethylase family. It depends on Fe(2+) as a cofactor.

The protein resides in the nucleus. The catalysed reaction is N(6),N(6),N(6)-trimethyl-L-lysyl(9)-[histone H3] + 2 2-oxoglutarate + 2 O2 = N(6)-methyl-L-lysyl(9)-[histone H3] + 2 formaldehyde + 2 succinate + 2 CO2. In terms of biological role, histone demethylase that specifically demethylates 'Lys-9' of histone H3, thereby playing a role in histone code. Does not demethylate histone H3 'Lys-4', H3 'Lys-27', H3 'Lys-36' nor H4 'Lys-20'. Only able to demethylate trimethylated H3 'Lys-9', with a weaker activity than KDM4A, KDM4C and KDM4D. Demethylation of Lys residue generates formaldehyde and succinate. Plays a critical role in the development of the central nervous system (CNS). This chain is Lysine-specific demethylase 4B (KDM4B), found in Homo sapiens (Human).